We begin with the raw amino-acid sequence, 302 residues long: NAD kinase 1 (302 aa).

The active-site Proton acceptor is Asp67. NAD(+) contacts are provided by residues Asp67–Gly68, Arg72, Asn148–Asp149, Lys178, and Asp180.

Belongs to the NAD kinase family. Requires a divalent metal cation as cofactor.

It localises to the cytoplasm. It carries out the reaction NAD(+) + ATP = ADP + NADP(+) + H(+). In terms of biological role, involved in the regulation of the intracellular balance of NAD and NADP, and is a key enzyme in the biosynthesis of NADP. Catalyzes specifically the phosphorylation on 2'-hydroxyl of the adenosine moiety of NAD to yield NADP. The chain is NAD kinase 1 from Prochlorococcus marinus (strain NATL2A).